The following is a 25-amino-acid chain: Snaclec bothroalternin subunit alpha/beta (25 aa).

Positions 1–25 constitute a C-type lectin domain; the sequence is DCPSDWSNHEGHCYRVFNEWMNWAD. Cys2 and Cys13 are oxidised to a cystine.

It belongs to the snaclec family. Heterodimer of subunits alpha and beta; disulfide-linked. Expressed by the venom gland.

The protein resides in the secreted. Functionally, thrombin (F2) inhibitor that inhibits aggregation of rabbit platelets induced by alpha-thrombin. The polypeptide is Snaclec bothroalternin subunit alpha/beta (Bothrops alternatus (Urutu)).